The primary structure comprises 100 residues: Ferredoxin (100 aa).

A propeptide spanning residues 1-8 (MLSQVCRF) is cleaved from the precursor. In terms of domain architecture, 2Fe-2S ferredoxin-type spans 9–100 (GTITAVKGGV…GENDGAVFEL (92 aa)). Positions 46, 52, 55, and 85 each coordinate [2Fe-2S] cluster.

Requires [2Fe-2S] cluster as cofactor.

Its subcellular location is the hydrogenosome. Ferredoxins are iron-sulfur proteins that transfer electrons in a wide variety of metabolic reactions. It links pyruvate:ferredoxin oxidoreductase to hydrogenase. The sequence is that of Ferredoxin from Trichomonas vaginalis.